We begin with the raw amino-acid sequence, 626 residues long: DNA-directed RNA polymerase subunit gamma (626 aa).

Zn(2+) is bound by residues cysteine 71, cysteine 73, cysteine 86, and cysteine 89. The Mg(2+) site is built by aspartate 467, aspartate 469, and aspartate 471.

The protein belongs to the RNA polymerase beta' chain family. RpoC1 subfamily. In terms of assembly, in cyanobacteria the RNAP catalytic core is composed of 2 alpha, 1 beta, 1 beta', 1 gamma and 1 omega subunit. When a sigma factor is associated with the core the holoenzyme is formed, which can initiate transcription. The cofactor is Mg(2+). Zn(2+) is required as a cofactor.

The catalysed reaction is RNA(n) + a ribonucleoside 5'-triphosphate = RNA(n+1) + diphosphate. In terms of biological role, DNA-dependent RNA polymerase catalyzes the transcription of DNA into RNA using the four ribonucleoside triphosphates as substrates. This Synechocystis sp. (strain ATCC 27184 / PCC 6803 / Kazusa) protein is DNA-directed RNA polymerase subunit gamma.